Reading from the N-terminus, the 196-residue chain is PRADC1-like protein (196 aa).

A signal peptide spans 1 to 18 (MLIAWLVLAATLSRSIRA). Residues 73-171 (ITDPPGACQE…STLQRLKRVH (99 aa)) enclose the PA domain. N-linked (GlcNAc...) asparagine glycosylation occurs at asparagine 179.

The protein resides in the secreted. May be involved in iversification of muscle cell fates. The polypeptide is PRADC1-like protein (Drosophila melanogaster (Fruit fly)).